Reading from the N-terminus, the 65-residue chain is Ubiquinol-cytochrome-c reductase complex assembly factor 6 (65 aa).

The Mitochondrial matrix segment spans residues 1 to 9 (MPAGVSWPR). Residues 10–32 (YLRMFAASVLSMFAGAQVVHHYY) form a helical; Signal-anchor for type II membrane protein membrane-spanning segment. Residues 33-65 (RPDLSIPEIPPKPGELRTELLGLKERQMDSQKQ) lie on the Mitochondrial intermembrane side of the membrane.

The protein belongs to the UQCC6 family. Highly expressed in skeletal and cardiac muscle (at protein level).

It is found in the mitochondrion inner membrane. In terms of biological role, required for the assembly and stability of the mitochondrial ubiquinol-cytochrome c reductase complex (complex III (CIII) or cytochrome b-c1 complex), a multisubunit transmembrane complex that is part of the mitochondrial electron transport chain (ETC) which drives oxidative phosphorylation. Mediates early complex III biogenesis. Participates in regulating the levels of electron transport chain proteins, and therefore energy supply, in response to changes in energy demand. Also required for cytochrome c oxidase complex (complex IV) assembly. The sequence is that of Ubiquinol-cytochrome-c reductase complex assembly factor 6 (uqcc6) from Danio rerio (Zebrafish).